Reading from the N-terminus, the 165-residue chain is Glycosyl-4,4'-diaponeurosporenoate acyltransferase (165 aa).

The signal sequence occupies residues 1-28 (MKTMKKYIKTAFFCSMYWLIVQLNIANL). The chain crosses the membrane as a helical span at residues 126–145 (YINIFYAMIANVPIIIVQRY).

It belongs to the acyltransferase CrtO family.

It localises to the cell membrane. It participates in carotenoid biosynthesis; staphyloxanthin biosynthesis; staphyloxanthin from farnesyl diphosphate: step 5/5. Functionally, catalyzes the acylation of glycosyl-4,4'-diaponeurosporenoate, i.e. the esterification of glucose at the C6'' position with the carboxyl group of the C(15) fatty acid 12-methyltetradecanoic acid, to yield staphyloxanthin. This is the last step in the biosynthesis of this orange pigment, present in most staphylococci strains. This Staphylococcus aureus (strain bovine RF122 / ET3-1) protein is Glycosyl-4,4'-diaponeurosporenoate acyltransferase (crtO).